Here is a 372-residue protein sequence, read N- to C-terminus: MAPAPPPAASFSPSEVQRRLAAGACWVRRGARLYDLSSFVRHHPGGEQLLRARAGQDISADLDGPPHRHSANARRWLEQYYVGELRGEQQGSMENEPVALEETQKTDPAMEPRFKVVDWDKDLVDWRKPLLWQVGHLGEKYDEWVHQPVTRPIRLFHSDLIEGLSKTVWYSVPIIWVPLVLYLSWSYYRTFAQGNVRLFTSFTTEYTVAVPKSMFPGLFMLGTFLWSLIEYLIHRFLFHMKPPSDSYYLIMLHFVMHGQHHKAPFDGSRLVFPPVPASLVIGVFYLCMQLILPEAVGGTVFAGGLLGYVLYDMTHYYLHFGSPHKGSYLYSLKAHHVKHHFAHQKSGFGISTKLWDYCFHTLTPEKPHLKTQ.

A Cytochrome b5 heme-binding domain is found at 8–86 (AASFSPSEVQ…LEQYYVGELR (79 aa)). H43 and H69 together coordinate heme. A run of 2 helical transmembrane segments spans residues 168 to 188 (VWYSVPIIWVPLVLYLSWSYY) and 213 to 233 (SMFPGLFMLGTFLWSLIEYLI). The Fatty acid hydroxylase domain maps to 219–361 (FMLGTFLWSL…TKLWDYCFHT (143 aa)). Zn(2+) is bound by residues H234, H239, H257, H260, and H261. Helical transmembrane passes span 268 to 288 (SRLVFPPVPASLVIGVFYLCM) and 290 to 310 (LILPEAVGGTVFAGGLLGYVL). Zn(2+) contacts are provided by H315, H319, H336, H339, and H340.

The protein belongs to the sterol desaturase family. SCS7 subfamily. Zn(2+) serves as cofactor. As to expression, detected in differentiating cultured keratinocytes (at protein level). Detected in epidermis and cultured keratinocytes. Highly expressed in brain and colon. Detected at lower levels in testis, prostate, pancreas and kidney.

It localises to the endoplasmic reticulum membrane. The protein resides in the microsome membrane. It catalyses the reaction a 1,2-saturated fatty acid + 2 Fe(II)-[cytochrome b5] + O2 + 2 H(+) = a (R)-2-hydroxy fatty acid + 2 Fe(III)-[cytochrome b5] + H2O. The enzyme catalyses hexadecanoate + 2 Fe(II)-[cytochrome b5] + O2 + 2 H(+) = (R)-2-hydroxyhexadecanoate + 2 Fe(III)-[cytochrome b5] + H2O. The catalysed reaction is octadecanoate + 2 Fe(II)-[cytochrome b5] + O2 + 2 H(+) = (R)-2-hydroxyoctadecanoate + 2 Fe(III)-[cytochrome b5] + H2O. It carries out the reaction docosanoate + 2 Fe(II)-[cytochrome b5] + O2 + 2 H(+) = 2-hydroxydocosanoate + 2 Fe(III)-[cytochrome b5] + H2O. It catalyses the reaction tetracosanoate + 2 Fe(II)-[cytochrome b5] + O2 + 2 H(+) = (R)-2-hydroxytetracosanoate + 2 Fe(III)-[cytochrome b5] + H2O. Its pathway is lipid metabolism; fatty acid metabolism. It participates in sphingolipid metabolism; galactosylceramide biosynthesis. Functionally, catalyzes the hydroxylation of free fatty acids at the C-2 position to produce 2-hydroxy fatty acids, which are building blocks of sphingolipids and glycosphingolipids common in neural tissue and epidermis. FA2H is stereospecific for the production of (R)-2-hydroxy fatty acids. Plays an essential role in the synthesis of galactosphingolipids of the myelin sheath. Responsible for the synthesis of sphingolipids and glycosphingolipids involved in the formation of epidermal lamellar bodies critical for skin permeability barrier. Participates in the synthesis of glycosphingolipids and a fraction of type II wax diesters in sebaceous gland, specifically regulating hair follicle homeostasis. Involved in the synthesis of sphingolipids of plasma membrane rafts, controlling lipid raft mobility and trafficking of raft-associated proteins. The protein is Fatty acid 2-hydroxylase of Homo sapiens (Human).